Here is a 394-residue protein sequence, read N- to C-terminus: p-hydroxybenzoate hydroxylase (394 aa).

Residues serine 13, glutamate 32, arginine 42–valine 47, and glutamine 102 each bind FAD. Substrate is bound by residues tyrosine 201, serine 212–arginine 214, and tyrosine 222. Aspartate 286 is an FAD binding site. Proline 293 provides a ligand contact to substrate. Leucine 299–asparagine 300 provides a ligand contact to FAD.

This sequence belongs to the aromatic-ring hydroxylase family. Homodimer. FAD is required as a cofactor.

The enzyme catalyses 4-hydroxybenzoate + NADPH + O2 + H(+) = 3,4-dihydroxybenzoate + NADP(+) + H2O. Its pathway is aromatic compound metabolism; benzoate degradation via hydroxylation; 3,4-dihydroxybenzoate from benzoate: step 2/2. Catalyzes the incorporation of an atom of dioxygen into p-hydroxybenzoate (p-OHB) to form 3,4-dihydroxybenzoate (3,4DOHB). The reaction occurs in two parts: reduction of the flavin adenine dinucleotide (FAD) in the enzyme by reduced nicotinamide adenine dinucleotide phosphate (NADPH) in response to binding p-hydroxybenzoate to the enzyme and oxidation of reduced FAD with oxygen to form a hydroperoxide, which then oxygenates p-hydroxybenzoate. In Pseudomonas fluorescens, this protein is p-hydroxybenzoate hydroxylase (pobA).